A 907-amino-acid chain; its full sequence is HMG box transcription factor BBX (907 aa).

The span at 1 to 19 (MKGSNRNKDHSTEGEGDGK) shows a compositional bias: basic and acidic residues. 4 disordered regions span residues 1-24 (MKGS…PKRK), 37-80 (LDFS…EQRA), 152-185 (TTNK…PTPK), and 220-242 (TPEA…RQKS). Composition is skewed to acidic residues over residues 39–52 (FSEE…EEDI) and 61–75 (DGLE…DDES). Residues 80–148 (ARRPMNAFLL…AFMKANPGYR (69 aa)) constitute a DNA-binding region (HMG box). A compositionally biased stretch (polar residues) spans 152–164 (TTNKPVKSPTPTV). The residue at position 242 (serine 242) is a Phosphoserine. A Glycyl lysine isopeptide (Lys-Gly) (interchain with G-Cter in SUMO2) cross-link involves residue lysine 384. Disordered stretches follow at residues 435 to 483 (IIED…DIES), 495 to 612 (DWGV…SERS), and 628 to 672 (TSLR…KKFK). Positions 447 to 457 (KIKKKKKKNKL) are enriched in basic residues. Serine 476 and serine 483 each carry phosphoserine. 2 stretches are compositionally biased toward basic and acidic residues: residues 496–506 (WGVDKLGETPR) and 534–550 (KKVS…ESRP). Lysine 571 participates in a covalent cross-link: Glycyl lysine isopeptide (Lys-Gly) (interchain with G-Cter in SUMO2). The segment covering 591–612 (KPEDSDCHRKTETCGSRKSERS) has biased composition (basic and acidic residues). Polar residues predominate over residues 656-668 (ESWTFNQSGTSGS). Lysine 693 is covalently cross-linked (Glycyl lysine isopeptide (Lys-Gly) (interchain with G-Cter in SUMO2)). At serine 701 the chain carries Phosphoserine. Disordered stretches follow at residues 708–736 (KCVS…SGDK), 769–854 (NALS…SSTP), and 877–907 (VHRG…CADQ). Residues 723-732 (SSESTKTSKG) show a composition bias toward low complexity. Polar residues predominate over residues 772–783 (SIPNTPEPTTMQ). Phosphoserine is present on serine 789. Residues 790–801 (QKRKARKTKITH) are compositionally biased toward basic residues. Serine 811 carries the post-translational modification Phosphoserine.

It is found in the nucleus. Transcription factor that is necessary for cell cycle progression from G1 to S phase. This is HMG box transcription factor BBX (Bbx) from Mus musculus (Mouse).